The sequence spans 138 residues: Transcription factor Atoh7-b (138 aa).

Residues 33-85 (KRRLAANARERRRMQGLNTAFDSLRKVVPQWGEDKKLSKYETLQMALSYIMAL) enclose the bHLH domain.

The protein resides in the nucleus. It localises to the perikaryon. It is found in the cell projection. Its subcellular location is the axon. Its function is as follows. Transcription factor that binds to DNA at the consensus sequence 5'-CAG[GC]TG-3'. Positively regulates the determination of retinal ganglion cell fate and formation of the optic nerve and retino-hypothalamic tract. Required for retinal circadian rhythm photoentrainment. Plays a role in brainstem auditory signaling and binaural processing. Regulates the differentiation of olfactory receptor neurons. During retinal neurogenesis, activates the transcription of several genes such as brn3d, coe3, cbfa2t2, glis2, elrC and xgadd45-gamma. This is Transcription factor Atoh7-b from Xenopus laevis (African clawed frog).